The chain runs to 153 residues: Superoxide dismutase [Cu-Zn] (153 aa).

Cu cation is bound by residues His-45 and His-47. Phosphothreonine is present on Thr-53. Cys-56 and Cys-145 are disulfide-bonded. Ser-59 bears the Phosphoserine mark. His-62 lines the Cu cation pocket. Zn(2+) contacts are provided by His-62, His-70, His-79, and Asp-82. His-119 lines the Cu cation pocket.

This sequence belongs to the Cu-Zn superoxide dismutase family. Homodimer. The cofactor is Cu cation. Zn(2+) is required as a cofactor.

It localises to the cytoplasm. It carries out the reaction 2 superoxide + 2 H(+) = H2O2 + O2. In terms of biological role, destroys radicals which are normally produced within the cells and which are toxic to biological systems. This is Superoxide dismutase [Cu-Zn] from Drosophila melanogaster (Fruit fly).